A 147-amino-acid polypeptide reads, in one-letter code: Large ribosomal subunit protein uL16 (147 aa).

The protein belongs to the universal ribosomal protein uL16 family. As to quaternary structure, part of the 50S ribosomal subunit.

Functionally, binds 23S rRNA and is also seen to make contacts with the A and possibly P site tRNAs. The sequence is that of Large ribosomal subunit protein uL16 from Finegoldia magna (strain ATCC 29328 / DSM 20472 / WAL 2508) (Peptostreptococcus magnus).